Reading from the N-terminus, the 268-residue chain is MAGLLDGKRILVTGIITDSSIAFHIAKVAQEAGAQLVLTGFDRLRLIQRIVDRLPEKAPLIELDVQNEEHLNTLAQRVTGEIGEGNKLDGVVHSIASSETGMADQPFFDAPYEDVSKGIHISADSDASLAKALLPIMNPGGSIVGMDFDPSRAMPAYNWMTVAKSALESVNRFVAREAGPHGVRSNLVAAGPIRTLAMAGIVGGVLGDQAAEQIRLLEEGWDQRAPIGWNMKDPTPVAKTVCALLSDWLPATTGTIIYADRGASTQLL.

Residues 20-21 (SI), 64-65 (DV), and 95-96 (IA) contribute to the NAD(+) site. Tyr157 is a substrate binding site. NAD(+)-binding residues include Lys164 and Ile193.

This sequence belongs to the short-chain dehydrogenases/reductases (SDR) family. FabI subfamily. In terms of assembly, homodimer. Homotetramer.

The catalysed reaction is a 2,3-saturated acyl-[ACP] + NAD(+) = a (2E)-enoyl-[ACP] + NADH + H(+). It carries out the reaction a 2,3-saturated acyl-CoA + NAD(+) = a (2E)-enoyl-CoA + NADH + H(+). It participates in lipid metabolism; mycolic acid biosynthesis. In terms of biological role, enoyl-ACP reductase of the type II fatty acid syntase (FAS-II) system, which is involved in the biosynthesis of mycolic acids, a major component of mycobacterial cell walls. Catalyzes the NADH-dependent reduction of the double bond of 2-trans-enoyl-[acyl-carrier protein], an essential step in the fatty acid elongation cycle of the FAS-II pathway. Shows preference for long-chain fatty acyl thioester substrates, and can also use 2-trans-enoyl-CoAs as alternative substrates. The mycobacterial FAS-II system utilizes the products of the FAS-I system as primers to extend fatty acyl chain lengths up to C56, forming the meromycolate chain that serves as the precursor for final mycolic acids. This chain is Enoyl-[acyl-carrier-protein] reductase [NADH], found in Mycobacterium avium.